The sequence spans 371 residues: tRNA-specific 2-thiouridylase MnmA (371 aa).

Residues G13 to S20 and M39 contribute to the ATP site. Positions N99–D101 are interaction with target base in tRNA. Residue C104 is the Nucleophile of the active site. Cysteines 104 and 200 form a disulfide. Position 128 (G128) interacts with ATP. Residues K150–Q152 form an interaction with tRNA region. C200 functions as the Cysteine persulfide intermediate in the catalytic mechanism. An interaction with tRNA region spans residues R309–Y310.

Belongs to the MnmA/TRMU family.

The protein localises to the cytoplasm. It carries out the reaction S-sulfanyl-L-cysteinyl-[protein] + uridine(34) in tRNA + AH2 + ATP = 2-thiouridine(34) in tRNA + L-cysteinyl-[protein] + A + AMP + diphosphate + H(+). In terms of biological role, catalyzes the 2-thiolation of uridine at the wobble position (U34) of tRNA, leading to the formation of s(2)U34. This chain is tRNA-specific 2-thiouridylase MnmA, found in Bacillus velezensis (strain DSM 23117 / BGSC 10A6 / LMG 26770 / FZB42) (Bacillus amyloliquefaciens subsp. plantarum).